Reading from the N-terminus, the 266-residue chain is F-actin-capping protein subunit beta (266 aa).

It belongs to the F-actin-capping protein beta subunit family. As to quaternary structure, component of the F-actin capping complex, composed of a heterodimer of an alpha and a beta subunit.

It is found in the cytoplasm. It localises to the cytoskeleton. Its subcellular location is the actin patch. Functionally, F-actin-capping proteins bind in a Ca(2+)-independent manner to the fast growing ends of actin filaments (barbed end) thereby blocking the exchange of subunits at these ends. Unlike other capping proteins (such as gelsolin and severin), these proteins do not sever actin filaments. The polypeptide is F-actin-capping protein subunit beta (cap2) (Aspergillus oryzae (strain ATCC 42149 / RIB 40) (Yellow koji mold)).